A 129-amino-acid polypeptide reads, in one-letter code: 3-aminoacrylate deaminase RutC (129 aa).

This sequence belongs to the RutC family.

It catalyses the reaction (Z)-3-aminoacrylate + H2O + H(+) = 3-oxopropanoate + NH4(+). Involved in pyrimidine catabolism. Catalyzes the deamination of 3-aminoacrylate to malonic semialdehyde, a reaction that can also occur spontaneously. RutC may facilitate the reaction and modulate the metabolic fitness, rather than catalyzing essential functions. This is 3-aminoacrylate deaminase RutC from Caulobacter vibrioides (strain ATCC 19089 / CIP 103742 / CB 15) (Caulobacter crescentus).